Reading from the N-terminus, the 1054-residue chain is Isoleucine--tRNA ligase (1054 aa).

Residues 58–68 (PFANGLPHYGH) carry the 'HIGH' region motif. Positions 627 to 631 (KMSKS) match the 'KMSKS' region motif. Residue Lys-630 participates in ATP binding.

It belongs to the class-I aminoacyl-tRNA synthetase family. IleS type 2 subfamily. As to quaternary structure, monomer. Requires Zn(2+) as cofactor.

It localises to the cytoplasm. It catalyses the reaction tRNA(Ile) + L-isoleucine + ATP = L-isoleucyl-tRNA(Ile) + AMP + diphosphate. Its function is as follows. Catalyzes the attachment of isoleucine to tRNA(Ile). As IleRS can inadvertently accommodate and process structurally similar amino acids such as valine, to avoid such errors it has two additional distinct tRNA(Ile)-dependent editing activities. One activity is designated as 'pretransfer' editing and involves the hydrolysis of activated Val-AMP. The other activity is designated 'posttransfer' editing and involves deacylation of mischarged Val-tRNA(Ile). The chain is Isoleucine--tRNA ligase from Corynebacterium efficiens (strain DSM 44549 / YS-314 / AJ 12310 / JCM 11189 / NBRC 100395).